Here is a 510-residue protein sequence, read N- to C-terminus: MIDALYILIVALVIYKTAQFVHRKSLEKKHHCQPVKQIPLVSILSGLGFDMFFKDTAEMTKNGGLHKKLQQMLESLQTTTFRSRMLTGSQIVTMEPENERTMCSSAHMKDWTIGYRPFALKPLLGDGIFSSEGESWKHSRIMLRPIFAKEHIKQITAMEPYMLLLIEIIKSSSANEGPVDLQPLFHAFTIDYASDFLFGESCDVLKENLGGKSTSGMDAQVKRDFASVFNDVQNYLTKRMMLGPLAFLVSSKDFHDGIKKQHEFVSYFVQKAISMSDEELNDESKNYVFLYQLAKQTKDAKVLQDELLSILLAGRNTTASLLSFLFFELSHHENVWTTLKEVVDQSFPDVESITFETIQNCDYLRWCLFESLRVNPSVPFNSRTANKDTILPRGGGEDCSHPILVKKGDQVLFPLYASNRQEKYFGRKPEEFIPERWRDLPKTGGPAFMPFSTGPRMCLGQQFALIEASYVTIRLVQTFSKLKSHSLEYAPKRLVAATIRLIDGCFVSFE.

A heme-binding site is contributed by Cys458.

The protein belongs to the cytochrome P450 family. Heme is required as a cofactor.

It localises to the membrane. In terms of biological role, together with an NADPH cytochrome P450 the enzyme system catalyzes the terminal hydroxylation as the first step in the assimilation of alkanes and fatty acids. In Candida maltosa (Yeast), this protein is Cytochrome P450 52C2 (CYP52C2).